Reading from the N-terminus, the 127-residue chain is Major sperm protein 10/36/56/76 (127 aa).

Position 2 is an N-acetylalanine (Ala2). Residues 9–126 (DIQTQPNAKI…RRKNLPIEYN (118 aa)) form the MSP domain.

As to expression, sperm.

The protein resides in the cell projection. The protein localises to the pseudopodium. It localises to the cytoplasm. It is found in the cytoskeleton. In terms of biological role, central component in molecular interactions underlying sperm crawling. Forms an extensive filament system that extends from sperm villipoda, along the leading edge of the pseudopod. This Caenorhabditis elegans protein is Major sperm protein 10/36/56/76 (msp-10).